Consider the following 300-residue polypeptide: MAAVSDIPVHLPKLLALFKTVVPKLVNNKHKGQYGRIGVIGGSLEYTGAPYFAAISSIRVGADLAHVFCHSNASAIIKSYSPDLIVHPVLDCVDAVERIAPWLERLHVVVIGPGLGREPGILKTASNVLKLCMDTKKPVVIDADGLFLLNDNLNLICGQPNVILTPNVMEFQRLFGEDDQAARQKMSLLGAGVTVLEKGANDKIYLPHCNEVHSMPSGGSGRRCGGQGDLLSGSLATFFSWSLQSGEPNPALVAACASSYFVKKLNAAAFQKFGRSLLASDMVNQIPSVFQTEFENSDPQ.

Residues 14 to 293 (LLALFKTVVP…NQIPSVFQTE (280 aa)) form the YjeF C-terminal domain. (6S)-NADPHX contacts are provided by residues Gly114 and 167 to 173 (NVMEFQR). ATP is bound by residues 198–202 (KGAND) and 219–228 (GSGRRCGGQG). Asp229 contributes to the (6S)-NADPHX binding site.

This sequence belongs to the NnrD/CARKD family. Mg(2+) is required as a cofactor.

It catalyses the reaction (6S)-NADHX + ATP = ADP + phosphate + NADH + H(+). The catalysed reaction is (6S)-NADPHX + ATP = ADP + phosphate + NADPH + H(+). In terms of biological role, catalyzes the dehydration of the S-form of NAD(P)HX at the expense of ATP, which is converted to ADP. Together with NAD(P)HX epimerase, which catalyzes the epimerization of the S- and R-forms, the enzyme allows the repair of both epimers of NAD(P)HX, a damaged form of NAD(P)H that is a result of enzymatic or heat-dependent hydration. This chain is ATP-dependent (S)-NAD(P)H-hydrate dehydratase, found in Drosophila melanogaster (Fruit fly).